The sequence spans 347 residues: 5-deoxyribose 1-phosphate isomerase (347 aa).

Residues 48 to 50 (RGA), Arg91, and Gln198 each bind substrate. Asp239 serves as the catalytic Proton donor. 249 to 250 (NK) is a binding site for substrate.

This sequence belongs to the EIF-2B alpha/beta/delta subunits family. DrdI subfamily.

It carries out the reaction 5-deoxy-alpha-D-ribose 1-phosphate = 5-deoxy-D-ribulose 1-phosphate. It functions in the pathway carbohydrate degradation. Its function is as follows. Catalyzes the isomerization of 5-deoxy-alpha-D-ribose 1-phosphate to 5-deoxy-D-ribulose 1-phosphate, as part of a 5-deoxyribose salvage pathway that recycles this toxic radical SAM enzyme by-product to mainstream metabolites. This chain is 5-deoxyribose 1-phosphate isomerase, found in Bacillus cereus (strain ATCC 14579 / DSM 31 / CCUG 7414 / JCM 2152 / NBRC 15305 / NCIMB 9373 / NCTC 2599 / NRRL B-3711).